Reading from the N-terminus, the 847-residue chain is Leucine--tRNA ligase (847 aa).

The 'HIGH' region signature appears at 39-49; sequence PYPSGALHMGH. The 'KMSKS' region signature appears at 613 to 617; sequence KMSKS. K616 lines the ATP pocket.

The protein belongs to the class-I aminoacyl-tRNA synthetase family.

It is found in the cytoplasm. It carries out the reaction tRNA(Leu) + L-leucine + ATP = L-leucyl-tRNA(Leu) + AMP + diphosphate. This Gloeobacter violaceus (strain ATCC 29082 / PCC 7421) protein is Leucine--tRNA ligase.